The following is a 763-amino-acid chain: Phospholipid phosphatase-related protein type 4 (763 aa).

The interval 33-54 is disordered; that stretch reads VHTSPGGGRRPGQAAGMSAKER. Serine 36 is modified (phosphoserine). 3 consecutive transmembrane segments (helical) span residues 67-87, 119-139, and 178-198; these read LPCF…SLYF, AIPF…TIMV, and FVGV…IIQL. N-linked (GlcNAc...) asparagine glycans are attached at residues asparagine 214 and asparagine 219. The chain crosses the membrane as a helical span at residues 247–267; that stretch reads SFPSQHATLAAFAAVYVSMYF. The N-linked (GlcNAc...) asparagine glycan is linked to asparagine 268. Transmembrane regions (helical) follow at residues 276–296 and 308–328; these read KLLK…CGLT and VYCG…YAVG. Serine 346 carries the post-translational modification Phosphoserine. N-linked (GlcNAc...) asparagine glycosylation is present at asparagine 362. Serine 385 is subject to Phosphoserine. Asparagine 432 is a glycosylation site (N-linked (GlcNAc...) asparagine). Serine 438 is modified (phosphoserine). N-linked (GlcNAc...) asparagine glycosylation is present at asparagine 455. Residues 458–529 are disordered; it reads RKLSLQVIEP…PRVSIQSRPG (72 aa). Residues serine 461 and serine 472 each carry the phosphoserine modification. Residues asparagine 513, asparagine 543, and asparagine 568 are each glycosylated (N-linked (GlcNAc...) asparagine). Phosphoserine is present on serine 606. Residues 669–694 are compositionally biased toward basic and acidic residues; sequence DSESCESLKDSFGSGDRKRSNIDSNE. Disordered regions lie at residues 669–698 and 739–763; these read DSES…HHHH and ERSN…AYKD. A compositionally biased stretch (polar residues) spans 740-749; it reads RSNSPENTRN.

This sequence belongs to the PA-phosphatase related phosphoesterase family. O-glycosylated. Probably at Ser-346. In terms of tissue distribution, expressed by glutamatergic neurons (at protein level).

It is found in the postsynaptic density membrane. Functionally, postsynaptic density membrane protein that indirectly regulates glutamatergic synaptic transmission through lysophosphatidic acid (LPA)-mediated signaling pathways. Binds lysophosphatidic acid (LPA) and mediates its internalization into cells. Could act as receptor or a transporter of this lipid at the post-synaptic membrane. Modulates lysophosphatidic acid (LPA) activity in neuron axonal outgrowth during development by attenuating phospholipid-induced axon collapse. In Homo sapiens (Human), this protein is Phospholipid phosphatase-related protein type 4.